The primary structure comprises 321 residues: NADH-ubiquinone oxidoreductase chain 1 (321 aa).

Helical transmembrane passes span 6 to 26, 67 to 87, 103 to 123, 143 to 163, 174 to 194, 220 to 240, 256 to 276, and 296 to 316; these read IVPP…LTAL, LLAT…LALA, LGLL…LWSG, ISYE…SGGF, PLYL…STLA, ASPF…MNTL, ALFT…FLWV, and FLPM…SMFG.

Belongs to the complex I subunit 1 family.

The protein resides in the mitochondrion inner membrane. It catalyses the reaction a ubiquinone + NADH + 5 H(+)(in) = a ubiquinol + NAD(+) + 4 H(+)(out). Functionally, core subunit of the mitochondrial membrane respiratory chain NADH dehydrogenase (Complex I) that is believed to belong to the minimal assembly required for catalysis. Complex I functions in the transfer of electrons from NADH to the respiratory chain. The immediate electron acceptor for the enzyme is believed to be ubiquinone. In Alligator mississippiensis (American alligator), this protein is NADH-ubiquinone oxidoreductase chain 1 (MT-ND1).